Consider the following 311-residue polypeptide: Pyrimidine-specific ribonucleoside hydrolase RihA (311 aa).

H240 is an active-site residue.

The protein belongs to the IUNH family. RihA subfamily.

Hydrolyzes with equal efficiency cytidine or uridine to ribose and cytosine or uracil, respectively. This chain is Pyrimidine-specific ribonucleoside hydrolase RihA, found in Escherichia coli O9:H4 (strain HS).